A 200-amino-acid polypeptide reads, in one-letter code: Recombination protein RecR (200 aa).

The segment at 57-72 adopts a C4-type zinc-finger fold; that stretch reads CRQCRTLTEEELCPQC. Residues 80–175 enclose the Toprim domain; that stretch reads TLLCVVEGPM…ITSRIAHGVP (96 aa).

It belongs to the RecR family.

In terms of biological role, may play a role in DNA repair. It seems to be involved in an RecBC-independent recombinational process of DNA repair. It may act with RecF and RecO. This chain is Recombination protein RecR, found in Pseudomonas fluorescens (strain SBW25).